The sequence spans 665 residues: UvrABC system protein B (665 aa).

One can recognise a Helicase ATP-binding domain in the interval 25–176 (NSIEKGNRFQ…NQRQLLRDLV (152 aa)). ATP is bound at residue 38-45 (GATGTGKT). Positions 91–114 (YYDYYQPEAYIPVSDTYIEKSASI) match the Beta-hairpin motif. A Helicase C-terminal domain is found at 429 to 595 (QVDDLLGEIK…PIVTRSSNAI (167 aa)). Residues 626-661 (PELIGQLEEQMKEAAKKLEFEEAAKYRDRIQHLRDK) form the UVR domain.

It belongs to the UvrB family. As to quaternary structure, forms a heterotetramer with UvrA during the search for lesions. Interacts with UvrC in an incision complex.

The protein resides in the cytoplasm. In terms of biological role, the UvrABC repair system catalyzes the recognition and processing of DNA lesions. A damage recognition complex composed of 2 UvrA and 2 UvrB subunits scans DNA for abnormalities. Upon binding of the UvrA(2)B(2) complex to a putative damaged site, the DNA wraps around one UvrB monomer. DNA wrap is dependent on ATP binding by UvrB and probably causes local melting of the DNA helix, facilitating insertion of UvrB beta-hairpin between the DNA strands. Then UvrB probes one DNA strand for the presence of a lesion. If a lesion is found the UvrA subunits dissociate and the UvrB-DNA preincision complex is formed. This complex is subsequently bound by UvrC and the second UvrB is released. If no lesion is found, the DNA wraps around the other UvrB subunit that will check the other stand for damage. This Gloeothece citriformis (strain PCC 7424) (Cyanothece sp. (strain PCC 7424)) protein is UvrABC system protein B.